The sequence spans 50 residues: Defensin D1 (50 aa).

4 disulfide bridges follow: Cys3-Cys50, Cys14-Cys35, Cys20-Cys44, and Cys24-Cys46.

In terms of processing, contains 4 disulfide bonds.

The protein resides in the secreted. Its function is as follows. Antimicrobial peptide active against fungi, Gram-positive and Gram-negative bacteria. Inhibits growth of hyphae in the fungi A.niger (IC(50)=3.5 ug/ml), B.sorokiniana (IC(50)=3.0 ug/ml), F.oxysporum (IC(50)=9.5 ug/ml), F.graminearum (IC(50)=6.9 ug/ml), F.culmorum (IC(50)=6.9 ug/ml) and B.cinerea (IC(50)=27.4 ug/ml). Has no effect on spore germination. Destroys spores in germinated conidia by disruption of cell walls and membranes in A.niger and B.sorokiniana. Causes vacuolization of germinated macro- and microconidia in F.oxysporum, F.graminearum and F.culmorum. Strongly inhibits growth of P.infestans on potato tubers above concentrations of 13.6 ug/ml. Inhibits growth of Gram-positive bacteria C.michiganensis and B.subtilis and of Gram-negative bacteria P.syringae, E.carotovora and E.coli. The polypeptide is Defensin D1 (Nigella sativa (Black cumin)).